We begin with the raw amino-acid sequence, 90 residues long: UPF0367 protein Ava_2513 (90 aa).

Belongs to the UPF0367 family.

This is UPF0367 protein Ava_2513 from Trichormus variabilis (strain ATCC 29413 / PCC 7937) (Anabaena variabilis).